Reading from the N-terminus, the 365-residue chain is tRNA(Met) cytidine acetate ligase (365 aa).

ATP contacts are provided by residues 7-20 (IAEF…HKYL), glycine 96, asparagine 152, and arginine 175.

This sequence belongs to the TmcAL family.

It is found in the cytoplasm. The enzyme catalyses cytidine(34) in elongator tRNA(Met) + acetate + ATP = N(4)-acetylcytidine(34) in elongator tRNA(Met) + AMP + diphosphate. Its function is as follows. Catalyzes the formation of N(4)-acetylcytidine (ac(4)C) at the wobble position of elongator tRNA(Met), using acetate and ATP as substrates. First activates an acetate ion to form acetyladenylate (Ac-AMP) and then transfers the acetyl group to tRNA to form ac(4)C34. This chain is tRNA(Met) cytidine acetate ligase, found in Streptococcus pneumoniae (strain 70585).